We begin with the raw amino-acid sequence, 978 residues long: NACHT, LRR and PYD domains-containing protein 4E (978 aa).

The 93-residue stretch at 1–93 (MASFFSDFGL…MERAGREIAG (93 aa)) folds into the Pyrin domain. One can recognise an NACHT domain in the interval 148-471 (HMVFLQGVAG…FHLLKSHVDH (324 aa)). Position 154 to 161 (154 to 161 (GVAGIGKS)) interacts with ATP. 6 LRR repeats span residues 594-617 (CSTLKKLSLSTQNILSEGQEHSYT), 694-717 (LLNLSLTFLSHNDVKLLCDVLNQA), 746-773 (SKMLKHLNLSSNNLDKGISSLSKALCHP), 802-825 (NKTLTHLDISFNDLKDEGLKVLCG), 859-882 (NQNLRNLQISNNKIEDAGVKLLCD), and 916-940 (CKTLLGINLQENALDHSGLVALFEA).

It belongs to the NLRP family.

Its function is as follows. May be involved in inflammation and recognition of cytosolic pathogen-associated molecular patterns (PAMPs) not intercepted by membrane-bound receptors. The polypeptide is NACHT, LRR and PYD domains-containing protein 4E (Nlrp4e) (Mus musculus (Mouse)).